The following is a 209-amino-acid chain: MSSQYSNVENLSPQTIRQVMRELQEMETTPPEGIKVLINESDVTDIQALIDGPAGTPYAVGIFRVKLTLSKDFPQTPPKAYFLTKIFHPNVAGNGEICVNTLKKDWKPDLGIKHILLTIKCLLIVPNPESALNEEAGKMLLERYDDYSQRARMMTEIHAQPAKCGVGAASDAKDDDGPSTKKHAGLDKKLQDKKKEKLLKEKKRMLKRL.

A UBC core domain is found at 14–160 (QTIRQVMREL…ARMMTEIHAQ (147 aa)). Cys98 (glycyl thioester intermediate) is an active-site residue. Positions 165–194 (GVGAASDAKDDDGPSTKKHAGLDKKLQDKK) are disordered. Positions 171-194 (DAKDDDGPSTKKHAGLDKKLQDKK) are enriched in basic and acidic residues.

The protein belongs to the ubiquitin-conjugating enzyme family.

The catalysed reaction is S-ubiquitinyl-[E1 ubiquitin-activating enzyme]-L-cysteine + [E2 ubiquitin-conjugating enzyme]-L-cysteine = [E1 ubiquitin-activating enzyme]-L-cysteine + S-ubiquitinyl-[E2 ubiquitin-conjugating enzyme]-L-cysteine.. Its pathway is protein modification; protein ubiquitination. Functionally, catalyzes the covalent attachment of ubiquitin to other proteins. Acts as an essential factor of the anaphase promoting complex/cyclosome (APC/C), a cell cycle-regulated ubiquitin ligase that controls progression through mitosis. Acts by specifically elongating polyubiquitin chains initiated by the E2 enzyme vih/UbcH10 on APC/C substrates, enhancing the degradation of APC/C substrates by the proteasome and promoting mitotic exit. This chain is Ubiquitin-conjugating enzyme E2 S, found in Drosophila persimilis (Fruit fly).